Here is a 488-residue protein sequence, read N- to C-terminus: Serine/threonine-protein kinase haspin homolog hrk1 (488 aa).

Residues 156–488 form the Protein kinase domain; that stretch reads TFEIQKIGEA…SLLNWVRQKY (333 aa). Residues 162–170 and lysine 184 each bind ATP; that span reads IGEASYSEV. Aspartate 305 serves as the catalytic Proton acceptor.

It belongs to the protein kinase superfamily. Ser/Thr protein kinase family. Haspin subfamily. In terms of assembly, interacts with pds5 and swi6.

It is found in the cytoplasm. The protein localises to the chromosome. The enzyme catalyses L-seryl-[protein] + ATP = O-phospho-L-seryl-[protein] + ADP + H(+). It carries out the reaction L-threonyl-[protein] + ATP = O-phospho-L-threonyl-[protein] + ADP + H(+). Its function is as follows. Serine/threonine haspin-like protein kinase involved in cell cycle regulation. Acts in chromosomal passenger complex (CPC) targeting to centromeres by phosphorylating histone H3 at 'Thr3' (H3T3ph). The chain is Serine/threonine-protein kinase haspin homolog hrk1 (hrk1) from Schizosaccharomyces pombe (strain 972 / ATCC 24843) (Fission yeast).